A 436-amino-acid polypeptide reads, in one-letter code: MQVSVENTSALERRMSITVPAERIESQVNKRLQQTAQKAKIPGFRPGKVPMSVIRQRYEADARQEAVGDVIQASFYEAVVEQKLNPAGAPSVEPKVLEKGKDLEYVATFEVFPEFTVAGFENIAVERLSADVADADLDNMLEILRKQNVRFEVADRAAQNDDQLNIDFVGKVDGEVFAGGSAKGTQLVLGSGRMIPGFEEGLVGAKAGEERVLNLTFPENYQNLDLANKAAEFTVTVNSVSEPKLPELTEEFFAQFGIKEAGLEGFRAEVRKNMERELRQAIKSKVKNQVMDGLLASNPIEVPKALLDNEVNRLRVQAVQQFGGNIKPDQLPAELFEEQAKRRVVLGLIVAEVVKQFDLKPDEDRVRELIQEMASAYQEPEQVVSWYYKNEQQLNEVRSVVLEEQVVDTVLQKASVTDKSVSYEEAVKPVEAPQAD.

Positions 161-246 constitute a PPIase FKBP-type domain; that stretch reads DDQLNIDFVG…VNSVSEPKLP (86 aa).

It belongs to the FKBP-type PPIase family. Tig subfamily.

It is found in the cytoplasm. It carries out the reaction [protein]-peptidylproline (omega=180) = [protein]-peptidylproline (omega=0). Functionally, involved in protein export. Acts as a chaperone by maintaining the newly synthesized protein in an open conformation. Functions as a peptidyl-prolyl cis-trans isomerase. The chain is Trigger factor from Pseudomonas fluorescens (strain ATCC BAA-477 / NRRL B-23932 / Pf-5).